A 66-amino-acid polypeptide reads, in one-letter code: Scarabaecin (66 aa).

An N-terminal signal peptide occupies residues 1–26; sequence MKTLTFYTLLLCAALYSNFFDCKAVA. Cysteine 46 and cysteine 57 are oxidised to a cystine.

It localises to the secreted. In terms of biological role, possesses antifungal activity against phytopathogenic fungi such as P.oryzae, R.solani and B.cinerea but not against phytopathogenic bacteria. Shows weak activity against the insect pathogenic fungus B.bassiana and against S.aureus. Binds chitin. The chain is Scarabaecin from Oryctes rhinoceros (Coconut rhinoceros beetle).